The chain runs to 417 residues: MSQRKRYSLNVVTSPSIPSPTPSAPIRTNESNWEAASPASAASSFLPNVHHGGTVLNPGLGIMRSPSLNKSGAFGRSGSSGSSTVIEPSNIKLLLIGDANVGKTAMILSYCRELLTRAEMSRSVRLRHQQQQQHKDLGLKKTVVNHRLSMKEKRKRYSSNDFEKEFKDINHFADETSDFGNPNIGDDNNHEMADPNEIVIETRSTIGIDIKTNLVNIDNRFFNVILWDTAGQERYQNAIIPSLYKKTNAVILTYDITNAKSFQSCMERWIVQALENFSSQDLLKARFFLVGNKIDLYKERQVTHYDVVQMVQEMQLKHGIKISGNFEVSCKWVNVVERTMNMIILDLVENGCFENNDPCVSITISDDVQGHEQEFHDTVEEPFNFTRQRQHQLEKNNTVDITKPNDDIANNQSICCV.

Residues 1–34 (MSQRKRYSLNVVTSPSIPSPTPSAPIRTNESNWE) form a disordered region. GTP-binding positions include 97 to 104 (GDANVGKT), 228 to 232 (DTAGQ), and 292 to 295 (NKID). 2 S-geranylgeranyl cysteine lipidation sites follow: Cys-415 and Cys-416.

Belongs to the small GTPase superfamily. Rab family. As to quaternary structure, interacts with MYO2 (via C-terminal tail domain). Interacts with YIF1, YIP3, YIP4 and YIP5.

It localises to the endoplasmic reticulum membrane. The protein resides in the bud tip. Its subcellular location is the bud neck. Functionally, involved in the positive control of both endoplasmic reticulum (ER) and mitochondrion inheritance during cell divison. Required for the MYO2-dependent retention of newly inherited mitochondria at the bud tip in developing daughter cells. The sequence is that of GTP-binding protein YPT11 (YPT11) from Saccharomyces cerevisiae (strain RM11-1a) (Baker's yeast).